The chain runs to 622 residues: Phosphatidylinositol 4-kinase gamma 6 (622 aa).

The 58-residue stretch at 38–95 (RRVFVQTDTGCVLGVELDRNDNVHTVKKRLQIAFNFPTEESSLTFGDMVLKNDLSAVR) folds into the Ubiquitin-like; degenerate domain. The region spanning 158-459 (GVEPIPVNGG…LTTEQDVLSP (302 aa)) is the PI3K/PI4K catalytic domain. Positions 164-170 (VNGGLGG) are G-loop. Residues 165 to 171 (NGGLGGA), Lys186, and 277 to 280 (QKFV) each bind ATP. Residues 310 to 318 (LNTDRHGGN) form a catalytic loop region. An activation loop region spans residues 339–365 (PIDHGLCLPETLEDPYFEWIHWPQASI). Residue Asp341 participates in ATP binding. Ser565 carries the post-translational modification Phosphoserine.

This sequence belongs to the PI3/PI4-kinase family. Type II PI4K subfamily.

It catalyses the reaction a 1,2-diacyl-sn-glycero-3-phospho-(1D-myo-inositol) + ATP = a 1,2-diacyl-sn-glycero-3-phospho-(1D-myo-inositol 4-phosphate) + ADP + H(+). The phosphorylation of phosphatidylinositol (PI) to PI4P is the first committed step in the generation of phosphatidylinositol 4,5-bisphosphate (PIP2), a precursor of the second messenger inositol 1,4,5-trisphosphate (InsP3). The polypeptide is Phosphatidylinositol 4-kinase gamma 6 (PI4KG6) (Arabidopsis thaliana (Mouse-ear cress)).